The following is a 124-amino-acid chain: Small ribosomal subunit protein uS12 (124 aa).

Positions 1–22 are disordered; sequence MATINQLVRKPRKRKVAKSDVP. The residue at position 89 (aspartate 89) is a 3-methylthioaspartic acid. The interval 101–124 is disordered; the sequence is TLDTQGVQNRKQGRSKYGAKRPKS. The segment covering 111 to 124 has biased composition (basic residues); it reads KQGRSKYGAKRPKS.

It belongs to the universal ribosomal protein uS12 family. Part of the 30S ribosomal subunit. Contacts proteins S8 and S17. May interact with IF1 in the 30S initiation complex.

With S4 and S5 plays an important role in translational accuracy. Functionally, interacts with and stabilizes bases of the 16S rRNA that are involved in tRNA selection in the A site and with the mRNA backbone. Located at the interface of the 30S and 50S subunits, it traverses the body of the 30S subunit contacting proteins on the other side and probably holding the rRNA structure together. The combined cluster of proteins S8, S12 and S17 appears to hold together the shoulder and platform of the 30S subunit. This Marinobacter nauticus (strain ATCC 700491 / DSM 11845 / VT8) (Marinobacter aquaeolei) protein is Small ribosomal subunit protein uS12.